The sequence spans 339 residues: Glycerol-3-phosphate dehydrogenase [NAD(P)+] (339 aa).

NADPH is bound by residues S15, Y16, H36, and K110. The sn-glycerol 3-phosphate site is built by K110, G139, and T141. A143 is a binding site for NADPH. The sn-glycerol 3-phosphate site is built by K195, D248, S258, R259, and N260. The Proton acceptor role is filled by K195. Residue R259 participates in NADPH binding. The NADPH site is built by V283 and E285.

It belongs to the NAD-dependent glycerol-3-phosphate dehydrogenase family.

The protein resides in the cytoplasm. The catalysed reaction is sn-glycerol 3-phosphate + NAD(+) = dihydroxyacetone phosphate + NADH + H(+). It carries out the reaction sn-glycerol 3-phosphate + NADP(+) = dihydroxyacetone phosphate + NADPH + H(+). It functions in the pathway membrane lipid metabolism; glycerophospholipid metabolism. Catalyzes the reduction of the glycolytic intermediate dihydroxyacetone phosphate (DHAP) to sn-glycerol 3-phosphate (G3P), the key precursor for phospholipid synthesis. The chain is Glycerol-3-phosphate dehydrogenase [NAD(P)+] from Salmonella agona (strain SL483).